Reading from the N-terminus, the 332-residue chain is NADH-quinone oxidoreductase subunit H (332 aa).

9 helical membrane-spanning segments follow: residues 4–24 (FAFF…IFAS), 44–64 (IGPD…MIKL), 78–98 (FIFA…LAAI), 120–140 (VALL…FLGG), 165–185 (VGAL…LVDI), 194–214 (FSWL…ALFI), 255–275 (IAGA…FWII), 279–299 (IMMI…RAAF), and 312–332 (YLIL…AVLL).

The protein belongs to the complex I subunit 1 family. As to quaternary structure, NDH-1 is composed of 14 different subunits. Subunits NuoA, H, J, K, L, M, N constitute the membrane sector of the complex.

Its subcellular location is the cell inner membrane. The catalysed reaction is a quinone + NADH + 5 H(+)(in) = a quinol + NAD(+) + 4 H(+)(out). NDH-1 shuttles electrons from NADH, via FMN and iron-sulfur (Fe-S) centers, to quinones in the respiratory chain. The immediate electron acceptor for the enzyme in this species is believed to be ubiquinone. Couples the redox reaction to proton translocation (for every two electrons transferred, four hydrogen ions are translocated across the cytoplasmic membrane), and thus conserves the redox energy in a proton gradient. This subunit may bind ubiquinone. The sequence is that of NADH-quinone oxidoreductase subunit H from Campylobacter jejuni subsp. doylei (strain ATCC BAA-1458 / RM4099 / 269.97).